A 148-amino-acid polypeptide reads, in one-letter code: Putative pre-16S rRNA nuclease (148 aa).

It belongs to the YqgF nuclease family.

The protein resides in the cytoplasm. Could be a nuclease involved in processing of the 5'-end of pre-16S rRNA. This Chlamydia muridarum (strain MoPn / Nigg) protein is Putative pre-16S rRNA nuclease.